The chain runs to 377 residues: Carbamoyl phosphate synthase small chain (377 aa).

The tract at residues methionine 1 to glutamate 186 is CPSase. The L-glutamine site is built by serine 47, glycine 238, and glycine 240. Positions histidine 190 to alanine 377 constitute a Glutamine amidotransferase type-1 domain. The Nucleophile role is filled by cysteine 266. The L-glutamine site is built by leucine 267, glutamine 270, asparagine 308, glycine 310, and phenylalanine 311. Residues histidine 350 and glutamate 352 contribute to the active site.

The protein belongs to the CarA family. As to quaternary structure, composed of two chains; the small (or glutamine) chain promotes the hydrolysis of glutamine to ammonia, which is used by the large (or ammonia) chain to synthesize carbamoyl phosphate. Tetramer of heterodimers (alpha,beta)4.

It carries out the reaction hydrogencarbonate + L-glutamine + 2 ATP + H2O = carbamoyl phosphate + L-glutamate + 2 ADP + phosphate + 2 H(+). The enzyme catalyses L-glutamine + H2O = L-glutamate + NH4(+). It participates in amino-acid biosynthesis; L-arginine biosynthesis; carbamoyl phosphate from bicarbonate: step 1/1. It functions in the pathway pyrimidine metabolism; UMP biosynthesis via de novo pathway; (S)-dihydroorotate from bicarbonate: step 1/3. Functionally, small subunit of the glutamine-dependent carbamoyl phosphate synthetase (CPSase). CPSase catalyzes the formation of carbamoyl phosphate from the ammonia moiety of glutamine, carbonate, and phosphate donated by ATP, constituting the first step of 2 biosynthetic pathways, one leading to arginine and/or urea and the other to pyrimidine nucleotides. The small subunit (glutamine amidotransferase) binds and cleaves glutamine to supply the large subunit with the substrate ammonia. This chain is Carbamoyl phosphate synthase small chain, found in Neisseria meningitidis serogroup A / serotype 4A (strain DSM 15465 / Z2491).